A 176-amino-acid polypeptide reads, in one-letter code: Putative L,D-transpeptidase YqjB (176 aa).

The N-terminal stretch at 1-25 is a signal peptide; that stretch reads MRFFLCSIFMMISPIWPLGENPLPG. The 125-residue stretch at 27-151 folds into the L,D-TPase catalytic domain; it reads PYVIVNKRTN…IPVGTRVLIT (125 aa). Residue His111 is the Proton donor/acceptor of the active site. Cys127 serves as the catalytic Nucleophile.

This sequence belongs to the YkuD family.

Its pathway is cell wall biogenesis; peptidoglycan biosynthesis. The chain is Putative L,D-transpeptidase YqjB (yqjB) from Bacillus subtilis (strain 168).